Here is a 1072-residue protein sequence, read N- to C-terminus: Dyslexia-associated protein KIAA0319 (1072 aa).

A signal peptide spans 1 to 20 (MAPPTGVLSSLLLLVTIAGC). The MANSC domain occupies 21–99 (ARKQCSEGRT…PKKMGPIRSY (79 aa)). The Extracellular segment spans residues 21 to 955 (ARKQCSEGRT…WDGESNCEWS (935 aa)). Disordered regions lie at residues 168-277 (LQPS…SLPP) and 295-327 (VTPG…SPTT). N-linked (GlcNAc...) asparagine glycosylation is found at asparagine 196, asparagine 219, and asparagine 262. The segment covering 254–265 (SQLQEQSSNSSG) has biased composition (polar residues). The span at 311-320 (AAPSESTPSE) shows a compositional bias: low complexity. PKD domains lie at 341 to 427 (DNLI…VKPA), 435 to 524 (VAVV…VNNA), 530 to 620 (VANA…VQPE), 621 to 714 (NNRP…VKKE), and 720 to 811 (RARA…VQPD). N-linked (GlcNAc...) asparagine glycans are attached at residues asparagine 394, asparagine 421, asparagine 498, asparagine 513, asparagine 536, and asparagine 551. Residue asparagine 733 is glycosylated (N-linked (GlcNAc...) asparagine). The chain crosses the membrane as a helical span at residues 956-976 (IFYVTVLAFTLIVLTGGFTWL). The Cytoplasmic portion of the chain corresponds to 977-1072 (CICCCKRQKR…ASFSYCSKDR (96 aa)). Residues 995–998 (YTIL) carry the Endocytosis signal motif. The segment at 1045-1072 (KMERGNPKVSMNGSIRNGASFSYCSKDR) is disordered. The span at 1053–1072 (VSMNGSIRNGASFSYCSKDR) shows a compositional bias: polar residues.

Homodimer. Interacts with AP2M1; required for clathrin-mediated endocytosis. N-glycosylated. Post-translationally, O-glycosylated. In terms of processing, shedding of the extracellular domain and intramembrane cleavage produce several proteolytic products. The intramembrane cleavage releases a soluble cytoplasmic polypeptide that translocates to the nucleolus. Detected in adult brain cortex and fetal frontal lobe (at protein level). Highly expressed in brain cortex, putamen, amygdala, hippocampus and cerebellum.

The protein localises to the cell membrane. It is found in the early endosome membrane. Involved in neuronal migration during development of the cerebral neocortex. May function in a cell autonomous and a non-cell autonomous manner and play a role in appropriate adhesion between migrating neurons and radial glial fibers. May also regulate growth and differentiation of dendrites. The sequence is that of Dyslexia-associated protein KIAA0319 (KIAA0319) from Homo sapiens (Human).